The chain runs to 306 residues: D-alanine--D-alanine ligase (306 aa).

In terms of domain architecture, ATP-grasp spans 101–303 (KYLWQGCGLP…FSQLVARILE (203 aa)). 134-189 (IDALGLPLFVKPSREGSSVGISRVNQASELQAALQEAFRFDDEVLVEAFLSGPEYT) is a binding site for ATP. 3 residues coordinate Mg(2+): Asp-257, Glu-270, and Asn-272.

Belongs to the D-alanine--D-alanine ligase family. Mg(2+) is required as a cofactor. Requires Mn(2+) as cofactor.

The protein localises to the cytoplasm. It carries out the reaction 2 D-alanine + ATP = D-alanyl-D-alanine + ADP + phosphate + H(+). Its pathway is cell wall biogenesis; peptidoglycan biosynthesis. Its function is as follows. Cell wall formation. This chain is D-alanine--D-alanine ligase, found in Erwinia tasmaniensis (strain DSM 17950 / CFBP 7177 / CIP 109463 / NCPPB 4357 / Et1/99).